The primary structure comprises 446 residues: Questin oxidase (446 aa).

It belongs to the questin oxidase family.

It catalyses the reaction questin + NADPH + O2 = demethylsulochrin + NADP(+). Its pathway is secondary metabolite biosynthesis. In terms of biological role, questin oxidase; part of the gene cluster that mediates the biosynthesis of geodin, an intermediate in the biosynthesis of other natural products. The pathway begins with the synthesis of atrochrysone thioester by the polyketide synthase (PKS) gedC. The atrochrysone carboxyl ACP thioesterase gedB then breaks the thioester bond and releases the atrochrysone carboxylic acid from gedC. The atrochrysone carboxylic acid is then converted to atrochrysone which is further transformed into emodinanthrone. The next step is performed by the emodinanthrone oxygenase gedH that catalyzes the oxidation of emodinanthrone to emodin. Emodin O-methyltransferase encoded probably by gedA then catalyzes methylation of the 8-hydroxy group of emodin to form questin. Ring cleavage of questin by questin oxidase gedK leads to desmethylsulochrin via several intermediates including questin epoxide. Another methylation step probably catalyzed by methyltransferase gedG leads to the formation of sulochrin which is further converted to dihydrogeodin by the sulochrin halogenase gedL. Finally, the dihydrogeodin oxidase gedJ catalyzes the stereospecific phenol oxidative coupling reaction converting dihydrogeodin to geodin. This is Questin oxidase from Aspergillus terreus (strain NIH 2624 / FGSC A1156).